The following is a 99-amino-acid chain: uncharacterized protein (99 aa).

A signal peptide spans 1–17; that stretch reads MMMNAFFPAMALMVLVG. Cys18 carries N-palmitoyl cysteine lipidation. Cys18 carries S-diacylglycerol cysteine lipidation.

The protein localises to the cell membrane. This is an uncharacterized protein from Shigella flexneri.